Consider the following 329-residue polypeptide: MALGPRYGAIRACGRVLERAFSLRKAHSIKDMENTLQLVRNIIPPLSSTKHKGQDGRIGVVGGCQEYTGAPYFAAISALKVGADLSHVFCASAAAPVIKAYSPELIVHPVLDSRSAVHEAEKWLPRLHALVVGPGLGRDDALLRNVQGILEASKARDIPVVIDADGLWLVAQQPALIQGYRKAVLTPNHMEFSRLYDAVLRGPMDSNDSHGSVLRLSQALGNVTVVQKGERDILSNGQQVLVCSQEGSSRRCGGQGDLLSGSLGVLVHWALLAGPEKTNGSSPLLVAAFGACSLTRQCNHQAFQKHGRSTTTSDMIAEVGAAFSKLFET.

In terms of domain architecture, YjeF C-terminal spans 35-326; the sequence is TLQLVRNIIP…AEVGAAFSKL (292 aa). Tyr-67 is subject to Phosphotyrosine. (6S)-NADPHX-binding positions include Gly-135 and 188–194; that span reads NHMEFSR. N-linked (GlcNAc...) asparagine glycosylation is found at Asn-207 and Asn-222. ATP contacts are provided by residues 228 to 232 and 247 to 256; these read KGERD and GSSRRCGGQG. Asp-257 is a (6S)-NADPHX binding site. Asn-279 is a glycosylation site (N-linked (GlcNAc...) asparagine).

It belongs to the NnrD/CARKD family. Requires Mg(2+) as cofactor.

The protein localises to the mitochondrion. The catalysed reaction is (6S)-NADHX + ATP = ADP + phosphate + NADH + H(+). It catalyses the reaction (6S)-NADPHX + ATP = ADP + phosphate + NADPH + H(+). Catalyzes the dehydration of the S-form of NAD(P)HX at the expense of ATP, which is converted to ADP. Together with NAD(P)HX epimerase, which catalyzes the epimerization of the S- and R-forms, the enzyme allows the repair of both epimers of NAD(P)HX, a damaged form of NAD(P)H that is a result of enzymatic or heat-dependent hydration. This chain is ATP-dependent (S)-NAD(P)H-hydrate dehydratase, found in Pongo abelii (Sumatran orangutan).